The chain runs to 308 residues: Aspartate carbamoyltransferase catalytic subunit (308 aa).

Carbamoyl phosphate contacts are provided by R57 and T58. Position 86 (K86) interacts with L-aspartate. Residues R107, H135, and Q138 each coordinate carbamoyl phosphate. R168 and R228 together coordinate L-aspartate. 2 residues coordinate carbamoyl phosphate: L267 and P268.

It belongs to the aspartate/ornithine carbamoyltransferase superfamily. ATCase family. Heterododecamer (2C3:3R2) of six catalytic PyrB chains organized as two trimers (C3), and six regulatory PyrI chains organized as three dimers (R2).

The enzyme catalyses carbamoyl phosphate + L-aspartate = N-carbamoyl-L-aspartate + phosphate + H(+). Its pathway is pyrimidine metabolism; UMP biosynthesis via de novo pathway; (S)-dihydroorotate from bicarbonate: step 2/3. Its function is as follows. Catalyzes the condensation of carbamoyl phosphate and aspartate to form carbamoyl aspartate and inorganic phosphate, the committed step in the de novo pyrimidine nucleotide biosynthesis pathway. The polypeptide is Aspartate carbamoyltransferase catalytic subunit (Leptospira interrogans serogroup Icterohaemorrhagiae serovar Lai (strain 56601)).